The following is a 445-amino-acid chain: METSKSSTMQVSFVCQRCSQPLKLDTSFKILDKVTMQELTAPLVTTAAVKPGDIQEVDSNIEETFAENRTDGVSRRLIPPARMMSTESATSFTLIGEASDGGTMENLSRRLKVTGDLFDIMSGQTDVDHPLCEECTDTLLDQLDTQLNITENECQNYKRCLEILERMNEDDKEKLEAKLKELAEDEDRLIQELEEVERNRELVAKDIEKVREEAERLEQEEARYQKEYSEFKRQQLELDDDLKSVENQMRYAQIQLDKLKKTNVFNATFHIWHSGQFGTINNFRLGRLPSVPVEWNEINAAWGQTVLLLHALANKMGLQFQRYRLMPFGNHSYLESLTDKSKELPLYCSGGLRFFWDNKFDHAMVAFLDCVQQFKEEVEKGDTGFCLPYRMDVEKGKIEDTGGSGGSYSIKTQFNSEEQWTKALKFMLTNLKWGLAWVSSQFYNK.

Positions 103–122 (TMENLSRRLKVTGDLFDIMS) match the BH3 motif. The stretch at 137–264 (DTLLDQLDTQ…QLDKLKKTNV (128 aa)) forms a coiled coil. Residues 240–445 (DDLKSVENQM…AWVSSQFYNK (206 aa)) are evolutionary conserved domain (ECD). Residues 420 to 445 (WTKALKFMLTNLKWGLAWVSSQFYNK) are required for membrane-association.

This sequence belongs to the beclin family. As to quaternary structure, component of the PI3K (PI3KC3/PI3K-III/class III phosphatidylinositol 3-kinase) complex. Post-translationally, may be proteolytically processed by caspases; the C-terminal fragment(s) may induce apoptosis.

The protein localises to the cytoplasm. It is found in the golgi apparatus. Its subcellular location is the trans-Golgi network membrane. It localises to the endosome membrane. The protein resides in the endoplasmic reticulum membrane. The protein localises to the mitochondrion membrane. It is found in the cytoplasmic vesicle. Its subcellular location is the autophagosome. Functionally, plays a central role in autophagy. Acts as core subunit of different PI3K complex forms that mediate formation of phosphatidylinositol 3-phosphate and are believed to play a role in multiple membrane trafficking pathways: PI3KC3-C1 is involved in initiation of autophagosomes and PI3KC3-C2 in maturation of autophagosomes and endocytosis. Involved in regulation of degradative endocytic trafficking and required for the abscission step in cytokinesis, probably in the context of PI3KC3-C2. Essential for the formation of PI3KC3-C2 but not PI3KC3-C1 PI3K complex forms. Involved in endocytosis including endosome formation in neuronal cells. The polypeptide is Beclin-1 (becn1) (Xenopus tropicalis (Western clawed frog)).